The following is a 209-amino-acid chain: Ubiquinone biosynthesis protein COQ4 homolog 2, mitochondrial (209 aa).

Zn(2+) is bound by residues His-118, Asp-119, His-122, and Glu-134.

Belongs to the COQ4 family. As to quaternary structure, component of a multi-subunit COQ enzyme complex. The cofactor is Zn(2+).

The protein localises to the mitochondrion inner membrane. It carries out the reaction a 4-hydroxy-3-methoxy-5-(all-trans-polyprenyl)benzoate + H(+) = a 2-methoxy-6-(all-trans-polyprenyl)phenol + CO2. Its pathway is cofactor biosynthesis; ubiquinone biosynthesis. Functionally, lyase that catalyzes the C1-decarboxylation of 4-hydroxy-3-methoxy-5-(all-trans-polyprenyl)benzoic acid into 2-methoxy-6-(all-trans-polyprenyl)phenol during ubiquinone biosynthesis. This Paramecium tetraurelia protein is Ubiquinone biosynthesis protein COQ4 homolog 2, mitochondrial.